A 172-amino-acid polypeptide reads, in one-letter code: Adenine phosphoribosyltransferase (172 aa).

The protein belongs to the purine/pyrimidine phosphoribosyltransferase family. In terms of assembly, homodimer.

The protein resides in the cytoplasm. It catalyses the reaction AMP + diphosphate = 5-phospho-alpha-D-ribose 1-diphosphate + adenine. It participates in purine metabolism; AMP biosynthesis via salvage pathway; AMP from adenine: step 1/1. Catalyzes a salvage reaction resulting in the formation of AMP, that is energically less costly than de novo synthesis. This Synechococcus sp. (strain CC9311) protein is Adenine phosphoribosyltransferase.